The sequence spans 292 residues: Glutamate racemase (292 aa).

Substrate contacts are provided by residues 28–29 (DS) and 60–61 (YG). Cysteine 91 serves as the catalytic Proton donor/acceptor. Residue 92–93 (NT) participates in substrate binding. The active-site Proton donor/acceptor is cysteine 200. 201-202 (TH) provides a ligand contact to substrate.

It belongs to the aspartate/glutamate racemases family.

The catalysed reaction is L-glutamate = D-glutamate. Its pathway is cell wall biogenesis; peptidoglycan biosynthesis. Functionally, provides the (R)-glutamate required for cell wall biosynthesis. The chain is Glutamate racemase from Trichormus variabilis (strain ATCC 29413 / PCC 7937) (Anabaena variabilis).